Consider the following 988-residue polypeptide: UPF0182 protein MAB_3498c (988 aa).

7 helical membrane-spanning segments follow: residues 19–39, 63–83, 114–134, 176–196, 211–231, 260–280, and 288–308; these read LVAASLVIVVLLLIGPRLVDT, LALFLIVGTLVAAVVFAGFGL, LFLIGVPILIGVLAGVVAQSY, FIAASIALIVNGLVHYIFGGI, IQLITFAGILVLLKVAAYWLD, KLILLAIAVICAVAVFSALVL, and IGLALLLLSSLVVGAGWPLIV.

The protein belongs to the UPF0182 family.

The protein localises to the cell membrane. The sequence is that of UPF0182 protein MAB_3498c from Mycobacteroides abscessus (strain ATCC 19977 / DSM 44196 / CCUG 20993 / CIP 104536 / JCM 13569 / NCTC 13031 / TMC 1543 / L948) (Mycobacterium abscessus).